The primary structure comprises 608 residues: Phosphogluconate dehydratase (608 aa).

Residues C154 and C221 each coordinate [4Fe-4S] cluster.

Belongs to the IlvD/Edd family. [4Fe-4S] cluster is required as a cofactor.

The catalysed reaction is 6-phospho-D-gluconate = 2-dehydro-3-deoxy-6-phospho-D-gluconate + H2O. Its pathway is carbohydrate metabolism; Entner-Doudoroff pathway. Functionally, catalyzes the dehydration of 6-phospho-D-gluconate to 2-dehydro-3-deoxy-6-phospho-D-gluconate. In Helicobacter pylori (strain ATCC 700392 / 26695) (Campylobacter pylori), this protein is Phosphogluconate dehydratase.